Reading from the N-terminus, the 730-residue chain is Rap1 GTPase-activating protein 2 (730 aa).

Phosphoserine; by PKG/PRKG1; in vitro is present on Ser-7. The interval Ala-32–Thr-53 is disordered. Position 45 is a phosphoserine (Ser-45). Residue Thr-49 is modified to Phosphothreonine. The region spanning Ile-248–Leu-464 is the Rap-GAP domain. Ser-507 is subject to Phosphoserine. The tract at residues Glu-509–His-533 is disordered. Phosphoserine occurs at positions 544, 558, 564, 612, and 613. Residues Val-552–His-730 are disordered. Residues Asp-585–Ser-613 show a composition bias toward polar residues. Residues Pro-618–Gly-631 show a composition bias toward basic and acidic residues. Positions Ser-635–Thr-647 are enriched in low complexity. Polar residues predominate over residues Gly-661–Phe-670. A compositionally biased stretch (low complexity) spans Ser-678–Ser-687. Polar residues predominate over residues Arg-699–Ser-712.

In vitro phosphorylated by cGMP-dependent protein kinase 1 (cGKI) at Ser-7; the phosphorylation probably does not regulate GAP activity. Isoform 1 and isoform 2 are expressed in platelets with isoform 2 being the predominant form. Expressed in lymphocytes, heart, testis and pancreas.

It is found in the cytoplasm. The protein resides in the perinuclear region. GTPase activator for the nuclear Ras-related regulatory protein RAP-1A (KREV-1), converting it to the putatively inactive GDP-bound state. This is Rap1 GTPase-activating protein 2 (RAP1GAP2) from Homo sapiens (Human).